The primary structure comprises 55 residues: Large ribosomal subunit protein bL33 (55 aa).

This sequence belongs to the bacterial ribosomal protein bL33 family.

This Methylorubrum extorquens (strain CM4 / NCIMB 13688) (Methylobacterium extorquens) protein is Large ribosomal subunit protein bL33.